We begin with the raw amino-acid sequence, 226 residues long: DNA mismatch repair protein MutH (226 aa).

It belongs to the MutH family.

It is found in the cytoplasm. Sequence-specific endonuclease that cleaves unmethylated GATC sequences. It is involved in DNA mismatch repair. This is DNA mismatch repair protein MutH from Vibrio parahaemolyticus serotype O3:K6 (strain RIMD 2210633).